A 1185-amino-acid chain; its full sequence is DNA-directed RNA polymerase subunit beta' (1185 aa).

Residues C67, C69, C82, and C85 each coordinate Zn(2+). Mg(2+)-binding residues include D457, D459, and D461. 4 residues coordinate Zn(2+): C802, C876, C883, and C886.

The protein belongs to the RNA polymerase beta' chain family. As to quaternary structure, the RNAP catalytic core consists of 2 alpha, 1 beta, 1 beta' and 1 omega subunit. When a sigma factor is associated with the core the holoenzyme is formed, which can initiate transcription. The cofactor is Mg(2+). Zn(2+) is required as a cofactor.

The enzyme catalyses RNA(n) + a ribonucleoside 5'-triphosphate = RNA(n+1) + diphosphate. Functionally, DNA-dependent RNA polymerase catalyzes the transcription of DNA into RNA using the four ribonucleoside triphosphates as substrates. In Clostridium novyi (strain NT), this protein is DNA-directed RNA polymerase subunit beta'.